A 1022-amino-acid polypeptide reads, in one-letter code: GPI ethanolamine phosphate transferase 1 (1022 aa).

Topologically, residues 1-6 (MARVGR) are cytoplasmic. The chain crosses the membrane as a helical span at residues 7–27 (VGFLTLAVVFHLMYAYSIFDI). Residues 28 to 466 (YFVSPIVSGM…LQTYDWLFLR (439 aa)) lie on the Lumenal side of the membrane. Asn-148 and Asn-433 each carry an N-linked (GlcNAc...) asparagine glycan. The chain crosses the membrane as a helical span at residues 467–487 (TIVSLGYLGWIAYALTTVIDL). The Cytoplasmic segment spans residues 488 to 498 (HVLHGKSESNR). A helical transmembrane segment spans residues 499-519 (TTFSIMFFSSILVALFSVLLY). The Lumenal portion of the chain corresponds to 520-560 (QGSSWRYYLYALFPIFFWEEVFARRKALLAGREILLGHVHS). The chain crosses the membrane as a helical span at residues 561–581 (VSGYFAFAIQLLLYVGVLEAL). Topologically, residues 582 to 589 (VQSYFHRD) are cytoplasmic. A helical transmembrane segment spans residues 590–610 (IFTVCFILGGFWPITYGTKFL). The Lumenal portion of the chain corresponds to 611-614 (GQHK). The helical transmembrane segment at 615-635 (LLSASWALGCFLMSIFTLLPA) threads the bilayer. Residues 636–640 (NKVED) lie on the Cytoplasmic side of the membrane. The helical transmembrane segment at 641 to 661 (MMMISCGSLLMFLTGLLYLIF) threads the bilayer. The Lumenal segment spans residues 662-685 (ERSILGQKRSSDPNSVVSSCGSRT). Residues 686 to 706 (IMGAQVGMILLALIVTRSSVA) traverse the membrane as a helical segment. Residues 707 to 713 (SLQAKQG) lie on the Cytoplasmic side of the membrane. The chain crosses the membrane as a helical span at residues 714-734 (LPLGNQVLGWAILVSSLLLPF). The Lumenal segment spans residues 735 to 749 (LHRLYPNSHYLHRLM). 2 consecutive transmembrane segments (helical) span residues 750-770 (VIFLTFSPIFIILTISYEGLF) and 771-791 (YFVFCMTLLAWVRLEQAIYIH). Topologically, residues 792–837 (TTAPTREQDHSVANGSLPAKKPSPGNTVVVEGQPYRYRTLSVSDAR) are lumenal. Asn-805 carries N-linked (GlcNAc...) asparagine glycosylation. The chain crosses the membrane as a helical span at residues 838–858 (VALFFFFLLQSGFFSTGNIAS). Over 859-880 (VSSFSLDSVYRLIPIFNPFAQG) the chain is Cytoplasmic. The helical transmembrane segment at 881 to 901 (ALLILKLLIPFAIISANLGIL) threads the bilayer. At 902–910 (NHRLEVAPS) the chain is on the lumenal side. A helical membrane pass occupies residues 911–931 (ALFMVVMSISDVMTLNFFYMV). Residues 932 to 947 (RDEGSWLEIGTTISHF) are Cytoplasmic-facing. A helical transmembrane segment spans residues 948-968 (CIASFLCTFVAVLEFLSELFI). Residues 969–1022 (SGVDFGHPATTVGSAVAKAVNGSVACGHSPDSDISGEDSTSVGITAKADPDARS) lie on the Lumenal side of the membrane. Asn-989 carries N-linked (GlcNAc...) asparagine glycosylation. Residues 998–1022 (PDSDISGEDSTSVGITAKADPDARS) are disordered.

This sequence belongs to the PIGG/PIGN/PIGO family. PIGN subfamily.

The protein localises to the endoplasmic reticulum membrane. It participates in glycolipid biosynthesis; glycosylphosphatidylinositol-anchor biosynthesis. Ethanolamine phosphate transferase involved in glycosylphosphatidylinositol-anchor biosynthesis. Transfers ethanolamine phosphate to the first alpha-1,4-linked mannose of the glycosylphosphatidylinositol precursor of GPI-anchor. This is GPI ethanolamine phosphate transferase 1 (mcd4) from Aspergillus oryzae (strain ATCC 42149 / RIB 40) (Yellow koji mold).